Reading from the N-terminus, the 599-residue chain is Mediator of RNA polymerase II transcription subunit 26 (599 aa).

The TFIIS N-terminal domain maps to 10–87 (QIRDRLLQAI…RSWQKLIEPV (78 aa)). Disordered stretches follow at residues 98–331 (AGAP…RLEL), 352–403 (AGLG…RDYT), and 427–470 (FDPM…LQSP). A compositionally biased stretch (basic and acidic residues) spans 123-133 (SVHDLKYRNDM). Polar residues predominate over residues 174 to 191 (VPNSSPLPTNGISGSPES). Positions 207 to 218 (NRLEHGENDKHS) are enriched in basic and acidic residues. The span at 314-324 (SPLPLAQPSTP) shows a compositional bias: pro residues. Basic and acidic residues predominate over residues 441–463 (EPVRADSPVHTEQPRTELDKPEA). Phosphoserine is present on residues serine 447 and serine 469.

This sequence belongs to the Mediator complex subunit 26 family. In terms of assembly, component of the Mediator complex, which is composed of MED1, MED4, MED6, MED7, MED8, MED9, MED10, MED11, MED12, MED13, MED13L, MED14, MED15, MED16, MED17, MED18, MED19, MED20, MED21, MED22, MED23, MED24, MED25, MED26, MED27, MED29, MED30, MED31, CCNC, CDK8 and CDC2L6/CDK11. The MED12, MED13, CCNC and CDK8 subunits form a distinct module termed the CDK8 module. Mediator containing the CDK8 module is less active than Mediator lacking this module in supporting transcriptional activation. Individual preparations of the Mediator complex lacking one or more distinct subunits have been variously termed ARC, CRSP, DRIP, PC2, SMCC and TRAP. Interacts with CEBPB (when not methylated).

The protein localises to the nucleus. Component of the Mediator complex, a coactivator involved in the regulated transcription of nearly all RNA polymerase II-dependent genes. Mediator functions as a bridge to convey information from gene-specific regulatory proteins to the basal RNA polymerase II transcription machinery. Mediator is recruited to promoters by direct interactions with regulatory proteins and serves as a scaffold for the assembly of a functional pre-initiation complex with RNA polymerase II and the general transcription factors. This is Mediator of RNA polymerase II transcription subunit 26 (MED26) from Bos taurus (Bovine).